The primary structure comprises 137 residues: uncharacterized protein (137 aa).

A signal peptide spans 1-19 (MVAFYGIFLFGTVYLFGLA).

This is an uncharacterized protein from Acanthamoeba polyphaga (Amoeba).